Reading from the N-terminus, the 607-residue chain is Glutamine--fructose-6-phosphate aminotransferase [isomerizing] (607 aa).

The active-site Nucleophile; for GATase activity is the Cys2. Positions 2–217 (CGIIGIIGND…DGDWAVLTRN (216 aa)) constitute a Glutamine amidotransferase type-2 domain. SIS domains follow at residues 283 to 422 (IGID…ARGA) and 455 to 597 (VCHD…VDQP). Lys602 acts as the For Fru-6P isomerization activity in catalysis.

In terms of assembly, homodimer.

The protein localises to the cytoplasm. It carries out the reaction D-fructose 6-phosphate + L-glutamine = D-glucosamine 6-phosphate + L-glutamate. Functionally, catalyzes the first step in hexosamine metabolism, converting fructose-6P into glucosamine-6P using glutamine as a nitrogen source. The chain is Glutamine--fructose-6-phosphate aminotransferase [isomerizing] from Brucella melitensis biotype 1 (strain ATCC 23456 / CCUG 17765 / NCTC 10094 / 16M).